Here is an 84-residue protein sequence, read N- to C-terminus: uncharacterized protein (84 aa).

A helical membrane pass occupies residues 10–32 (AFSLAYYIIIHLLCLSYIYEIIH).

The protein localises to the membrane. This is an uncharacterized protein from Saccharomyces cerevisiae (strain ATCC 204508 / S288c) (Baker's yeast).